Consider the following 152-residue polypeptide: Small ribosomal subunit protein bS16 (152 aa).

Residues 118 to 130 (AEKHKAKASEKKA) are compositionally biased toward basic and acidic residues. The disordered stretch occupies residues 118–152 (AEKHKAKASEKKAAAAASADEAGSAAADDAEGSES). Over residues 131–144 (AAAASADEAGSAAA) the composition is skewed to low complexity.

The protein belongs to the bacterial ribosomal protein bS16 family.

The protein is Small ribosomal subunit protein bS16 of Beutenbergia cavernae (strain ATCC BAA-8 / DSM 12333 / CCUG 43141 / JCM 11478 / NBRC 16432 / NCIMB 13614 / HKI 0122).